The chain runs to 198 residues: Recombination protein RecR (198 aa).

A C4-type zinc finger spans residues 57–72 (CSICGNLTESDPCAIC). The 96-residue stretch at 80-175 (TTILVVEESK…KVTRLAHGLA (96 aa)) folds into the Toprim domain.

This sequence belongs to the RecR family.

Its function is as follows. May play a role in DNA repair. It seems to be involved in an RecBC-independent recombinational process of DNA repair. It may act with RecF and RecO. This Lactococcus lactis subsp. cremoris (strain SK11) protein is Recombination protein RecR.